A 199-amino-acid polypeptide reads, in one-letter code: Cytosine-containing mismatch-binding protein 1 (199 aa).

Residues 123–197 (PKKPSSAFIL…QYDKFMKEAG (75 aa)) constitute a DNA-binding region (HMG box).

As to quaternary structure, monomer.

It localises to the nucleus. Binds to cytosines in base mismatches and opposite chemically altered guanines. May be involved in repair of DNA damage. This chain is Cytosine-containing mismatch-binding protein 1, found in Schizosaccharomyces pombe (strain 972 / ATCC 24843) (Fission yeast).